A 263-amino-acid polypeptide reads, in one-letter code: Protein MARD1 (263 aa).

The FLZ-type zinc-finger motif lies at 219–263; that stretch reads SFLSRCFTCKKNLDQKQDIYIYRGEKGFCSSECRYQEMLLDQMET.

Belongs to the FLZ family. Interacts with KIN10 and KIN11 via its FLZ-type zinc finger domain. Interacts with KINB1 and KINB2 via its N-terminal part. Interacts with TZF4, TZF5 and TZF6. Interacts with MPK3 and MPK6.

Its subcellular location is the cytoplasm. The protein resides in the stress granule. It localises to the P-body. May act as an adapter to facilitate the interaction of SnRK1 complex with effector proteins, conferring tissue- and stimulus-type specific differences in the SnRK1 regulation pathway. Involved in seed dormancy control. This is Protein MARD1 from Arabidopsis thaliana (Mouse-ear cress).